Reading from the N-terminus, the 76-residue chain is Omega-conotoxin-like Ai6.3 (76 aa).

The first 22 residues, 1 to 22 (MKLTCLMIVAVLFLTAWTFVTA), serve as a signal peptide directing secretion. Residues 23-50 (VPDSSNALENLYLKAHHEMNNPEDSELN) constitute a propeptide that is removed on maturation. Cystine bridges form between C53/C67, C60/C71, and C66/C75.

It belongs to the conotoxin O1 superfamily. Expressed by the venom duct.

The protein localises to the secreted. In terms of biological role, omega-conotoxins act at presynaptic membranes, they bind and block voltage-gated calcium channels (Cav). The protein is Omega-conotoxin-like Ai6.3 of Conus ammiralis (Admiral cone).